The chain runs to 373 residues: Transcription factor bHLH87 (373 aa).

A disordered region spans residues 127-227 (SAESENREIT…GGSSNISFQH (101 aa)). The span at 188–218 (PQDDSEKGGFKLIYDENQSKSKKPRTEKERG) shows a compositional bias: basic and acidic residues. Positions 275-324 (ISTDPQTVAARQRRERISEKIRVLQTLVPGGTKMDTASMLDEAANYLKFL) constitute a bHLH domain.

In terms of assembly, homodimer. In terms of tissue distribution, flowers.

Its subcellular location is the nucleus. The polypeptide is Transcription factor bHLH87 (BHLH87) (Arabidopsis thaliana (Mouse-ear cress)).